Consider the following 675-residue polypeptide: Methionine--tRNA ligase (675 aa).

A 'HIGH' region motif is present at residues 15–25 (PYANGSIHLGH). Cys146, Cys149, Cys159, and Cys162 together coordinate Zn(2+). Residues 332 to 336 (KMSKS) carry the 'KMSKS' region motif. Lys335 serves as a coordination point for ATP. Positions 574 to 675 (DFAKLDLRIA…AGAKPGMRVK (102 aa)) constitute a tRNA-binding domain.

The protein belongs to the class-I aminoacyl-tRNA synthetase family. MetG type 1 subfamily. In terms of assembly, homodimer. The cofactor is Zn(2+).

The protein localises to the cytoplasm. It catalyses the reaction tRNA(Met) + L-methionine + ATP = L-methionyl-tRNA(Met) + AMP + diphosphate. Its function is as follows. Is required not only for elongation of protein synthesis but also for the initiation of all mRNA translation through initiator tRNA(fMet) aminoacylation. The chain is Methionine--tRNA ligase from Tolumonas auensis (strain DSM 9187 / NBRC 110442 / TA 4).